The primary structure comprises 93 residues: MARSIKKGPFVDDHLAKKVAAEGTGSKKVLKTWSRRSTITPDFIGLTFAVHNGKKFIPVFVTENMVGHKLGEFAPTRTFYGHAADKKSKLKKK.

This sequence belongs to the universal ribosomal protein uS19 family.

Its function is as follows. Protein S19 forms a complex with S13 that binds strongly to the 16S ribosomal RNA. The sequence is that of Small ribosomal subunit protein uS19 from Geobacter metallireducens (strain ATCC 53774 / DSM 7210 / GS-15).